Reading from the N-terminus, the 317-residue chain is MFQAAERPQEWAMEGPRDGLKKERLLDDRHDSGLDSMKDEEYEQMVKELQEIRLEPQEVPRGSEPWKQQLTEDGDSFLHLAIIHEEKALTMEVIRQVKGDLAFLNFQNNLQQTPLHLAVITNQPEIAEALLGAGCDPELRDFRGNTPLHLACEQGCLASVGVLTQSCTTPHLHSILKATNYNGHTCLHLASIHGYLGIVELLVSLGADVNAQEPCNGRTALHLAVDLQNPDLVSLLLKCGADVNRVTYQGYSPYQLTWGRPSTRIQQQLGQLTLENLQMLPESEDEESYDTESEFTEFTEDELPYDDCVFGGQRLTL.

A disordered region spans residues 1-39 (MFQAAERPQEWAMEGPRDGLKKERLLDDRHDSGLDSMKD). Positions 15–39 (GPRDGLKKERLLDDRHDSGLDSMKD) are enriched in basic and acidic residues. A Glycyl lysine isopeptide (Lys-Gly) (interchain with G-Cter in SUMO); alternate cross-link involves residue K21. K21 is covalently cross-linked (Glycyl lysine isopeptide (Lys-Gly) (interchain with G-Cter in ubiquitin); alternate). A Glycyl lysine isopeptide (Lys-Gly) (interchain with G-Cter in ubiquitin) cross-link involves residue K22. Residues 30–36 (HDSGLDS) carry the Destruction motif motif. S32 is subject to Phosphoserine; by IKKA and IKKE. The residue at position 36 (S36) is a Phosphoserine; by IKKA, IKKB, IKKE and TBK1. Y42 is subject to Phosphotyrosine; by Tyr-kinases. A Nuclear export signal motif is present at residues 45-54 (MVKELQEIRL). ANK repeat units lie at residues 73-103 (DGDS…DLAF), 110-139 (LQQT…DPEL), 143-172 (RGNT…TPHL), 182-211 (NGHT…DVNA), and 216-245 (NGRT…DVNR). A Nuclear import signal motif is present at residues 110-120 (LQQTPLHLAVI). A (3S)-3-hydroxyasparagine; by HIF1AN; partial mark is found at N210 and N244. 2 positions are modified to phosphoserine; by CK2: S283 and S288. Phosphothreonine; by CK2 is present on T291. S293 carries the phosphoserine; by CK2 modification. Phosphothreonine; by CK2 is present on T299.

Belongs to the NF-kappa-B inhibitor family. As to quaternary structure, interacts with RELA; the interaction requires the nuclear import signal. Part of a 70-90 kDa complex at least consisting of CHUK, IKBKB, NFKBIA, RELA, ELP1 and MAP3K14. Interacts with NKIRAS1 and NKIRAS2. Interacts with isoform 1 and isoform 2 of RWDD3; the interaction enhances sumoylation. Interacts with PRMT2. Interacts with PRKACA in platelets; this interaction is disrupted by thrombin and collagen. Interacts with MEFV. Interacts with DDRGK1; positively regulates NFKBIA phosphorylation and degradation. Interacts with HNRNPA2B1; the interaction may be mediated by the RRM2 domain of HNRNPA2B1, and HNRNPA2B1 may interact simultaneously with FAM76B and either NFKBIA or NFKBIE to form a complex. In terms of assembly, (Microbial infection) Interacts with HBV protein X. In terms of processing, phosphorylated at Ser-32 and Ser-36 by IKKA/CHUK and IKKB/IKBKB; disables inhibition of NF-kappa-B DNA-binding activity. Phosphorylation at positions 32 and 36 is prerequisite to recognition by the SCF(FBXW11) and SCF(BTRC) complexes, leading to polyubiquitination and subsequent degradation. Phosphorylated at Ser-32 in response to FK506 treatment: phosphorylation is independent of IKKA/CHUK and IKKB/IKBKB and promotes NFKBIA degradation, followed by NF-kappa-B activation. Phosphorylated at Tyr-42: its effect is however unclear. According to a report, phosphorylation at Tyr-42 activates NF-kappa-B without triggering proteolytic degradation of NFKBIA. According to another publication, phosphorylation at Tyr-42 inhibits NF-kappa-B activity by preventing phosphorylation at Ser-32 and Ser-36 and subsequent ubiquitination and degradation. Post-translationally, polyubiquitinated at Lys-21 and/or Lys-22 following phosphorylation at Ser-32 and Ser-36. Monoubiquitinated at Lys-21 and/or Lys-22 by UBE2D3. Ubiquitin chain elongation is then performed by CDC34 in cooperation with the SCF(FBXW11) E3 ligase complex, building ubiquitin chains from the UBE2D3-primed NFKBIA-linked ubiquitin. The resulting polyubiquitination leads to protein degradation. Also ubiquitinated by the SCF(BTRC) complex following stimulus-dependent phosphorylation at Ser-32 and Ser-36. Deubiquitinated by USP38, leading to NF-kappa-B inhibition. Sumoylated; sumoylation requires the presence of the nuclear import signal. Sumoylation blocks ubiquitination and proteasome-mediated degradation of the protein thereby increasing the protein stability. In terms of processing, hydroxylated by HIF1AN. Post-translationally, (Microbial infection) Deubiquitinated by porcine reproductive and respiratory syndrome virus Nsp2 protein, which thereby interferes with NFKBIA degradation and impairs subsequent NF-kappa-B activation.

The protein resides in the cytoplasm. Its subcellular location is the nucleus. Inhibits the activity of dimeric NF-kappa-B/REL complexes by trapping REL (RELA/p65 and NFKB1/p50) dimers in the cytoplasm by masking their nuclear localization signals. On cellular stimulation by immune and pro-inflammatory responses, becomes phosphorylated promoting ubiquitination and degradation, enabling the dimeric RELA to translocate to the nucleus and activate transcription. The polypeptide is NF-kappa-B inhibitor alpha (NFKBIA) (Homo sapiens (Human)).